The following is a 58-amino-acid chain: ATP synthase F(0) complex subunit k, mitochondrial (58 aa).

K16 and K17 each carry N6-acetyllysine. The helical transmembrane segment at 23-45 threads the bilayer; it reads TLTGRMNCVLATYGSIALIVLYF.

In terms of assembly, component of the ATP synthase complex composed at least of ATP5F1A/subunit alpha, ATP5F1B/subunit beta, ATP5MC1/subunit c (homooctomer), MT-ATP6/subunit a, MT-ATP8/subunit 8, ATP5ME/subunit e, ATP5MF/subunit f, ATP5MG/subunit g, ATP5MK/subunit k, ATP5MJ/subunit j, ATP5F1C/subunit gamma, ATP5F1D/subunit delta, ATP5F1E/subunit epsilon, ATP5PF/subunit F6, ATP5PB/subunit b, ATP5PD/subunit d, ATP5PO/subunit OSCP. ATP synthase complex consists of a soluble F(1) head domain (subunits alpha(3) and beta(3)) - the catalytic core - and a membrane F(0) domain - the membrane proton channel (subunits c, a, 8, e, f, g, k and j). These two domains are linked by a central stalk (subunits gamma, delta, and epsilon) rotating inside the F1 region and a stationary peripheral stalk (subunits F6, b, d, and OSCP). The ATP synthase complex/complex V exists as a monomeric and a dimeric supercomplex that helps shape mitochondrial cristae to optimize proton flow.

Its subcellular location is the mitochondrion membrane. Functionally, subunit k, of the mitochondrial membrane ATP synthase complex (F(1)F(0) ATP synthase or Complex V) that produces ATP from ADP in the presence of a proton gradient across the membrane which is generated by electron transport complexes of the respiratory chain. ATP synthase complex consist of a soluble F(1) head domain - the catalytic core - and a membrane F(1) domain - the membrane proton channel. These two domains are linked by a central stalk rotating inside the F(1) region and a stationary peripheral stalk. During catalysis, ATP synthesis in the catalytic domain of F(1) is coupled via a rotary mechanism of the central stalk subunits to proton translocation. In vivo, can only synthesize ATP although its ATP hydrolase activity can be activated artificially in vitro. Part of the complex F(0) domain. Required for dimerization of the ATP synthase complex and as such regulates ATP synthesis in the mitochondria. The protein is ATP synthase F(0) complex subunit k, mitochondrial of Homo sapiens (Human).